We begin with the raw amino-acid sequence, 220 residues long: Charged multivesicular body protein 4b (220 aa).

2 disordered regions span residues 1–22 and 180–220; these read MSLF…SPQE and EIGD…WAAN. Coiled-coil stretches lie at residues 21–88 and 123–181; these read QEAI…STIE and IDKV…LLEI.

Belongs to the SNF7 family. As to quaternary structure, probable core component of the endosomal sorting required for transport complex III (ESCRT-III). ESCRT-III components are thought to multimerize to form a flat lattice on the perimeter membrane of the endosome.

It is found in the cytoplasm. Its subcellular location is the cytosol. The protein resides in the late endosome membrane. The protein localises to the midbody. Its function is as follows. Probable core component of the endosomal sorting required for transport complex III (ESCRT-III) which is involved in multivesicular bodies (MVBs) formation and sorting of endosomal cargo proteins into MVBs. MVBs contain intraluminal vesicles (ILVs) that are generated by invagination and scission from the limiting membrane of the endosome and mostly are delivered to lysosomes enabling degradation of membrane proteins, such as stimulated growth factor receptors, lysosomal enzymes and lipids. This chain is Charged multivesicular body protein 4b (chmp4b), found in Danio rerio (Zebrafish).